Reading from the N-terminus, the 510-residue chain is Maturase K (510 aa).

The protein belongs to the intron maturase 2 family. MatK subfamily.

The protein resides in the plastid. It localises to the chloroplast. In terms of biological role, usually encoded in the trnK tRNA gene intron. Probably assists in splicing its own and other chloroplast group II introns. The chain is Maturase K from Populus alba (White poplar).